Consider the following 424-residue polypeptide: tRNA modification GTPase MnmE (424 aa).

Residues arginine 20, glutamate 77, and arginine 117 each coordinate (6S)-5-formyl-5,6,7,8-tetrahydrofolate. The TrmE-type G domain maps to 212–351; that stretch reads GVRVVFAGPP…LVRDLRDAAR (140 aa). Residue asparagine 222 coordinates K(+). GTP contacts are provided by residues 222–227, 241–247, and 266–269; these read NAGKST, SPIAGTT, and DTAG. A Mg(2+)-binding site is contributed by serine 226. K(+)-binding residues include serine 241, isoleucine 243, and threonine 246. Threonine 247 provides a ligand contact to Mg(2+). Residue lysine 424 coordinates (6S)-5-formyl-5,6,7,8-tetrahydrofolate.

Belongs to the TRAFAC class TrmE-Era-EngA-EngB-Septin-like GTPase superfamily. TrmE GTPase family. Homodimer. Heterotetramer of two MnmE and two MnmG subunits. The cofactor is K(+).

The protein localises to the cytoplasm. Functionally, exhibits a very high intrinsic GTPase hydrolysis rate. Involved in the addition of a carboxymethylaminomethyl (cmnm) group at the wobble position (U34) of certain tRNAs, forming tRNA-cmnm(5)s(2)U34. This chain is tRNA modification GTPase MnmE, found in Erythrobacter litoralis (strain HTCC2594).